Here is a 94-residue protein sequence, read N- to C-terminus: Large ribosomal subunit protein bL31 (94 aa).

Residues 64 to 94 are disordered; the sequence is KYGMANPDEDSTKNTKSSKKETSEDSSSKGS. The span at 73-94 shows a compositional bias: basic and acidic residues; that stretch reads DSTKNTKSSKKETSEDSSSKGS.

The protein belongs to the bacterial ribosomal protein bL31 family. Type A subfamily. As to quaternary structure, part of the 50S ribosomal subunit.

Its function is as follows. Binds the 23S rRNA. This chain is Large ribosomal subunit protein bL31, found in Prochlorococcus marinus (strain SARG / CCMP1375 / SS120).